A 336-amino-acid polypeptide reads, in one-letter code: Holliday junction branch migration complex subunit RuvB (336 aa).

Positions 1–182 (MKERIVNLET…FGMSFRMQFY (182 aa)) are large ATPase domain (RuvB-L). Residues Leu-21, Arg-22, Gly-63, Lys-66, Thr-67, Ser-68, 129–131 (EDF), Arg-172, Tyr-182, and Arg-219 contribute to the ATP site. Mg(2+) is bound at residue Thr-67. The segment at 183–253 (SPSELSLIIK…ITLHALNELG (71 aa)) is small ATPAse domain (RuvB-S). The tract at residues 256-336 (ELGFDEADLA…IPTLNPQTLF (81 aa)) is head domain (RuvB-H). Positions 310 and 315 each coordinate DNA.

Belongs to the RuvB family. As to quaternary structure, homohexamer. Forms an RuvA(8)-RuvB(12)-Holliday junction (HJ) complex. HJ DNA is sandwiched between 2 RuvA tetramers; dsDNA enters through RuvA and exits via RuvB. An RuvB hexamer assembles on each DNA strand where it exits the tetramer. Each RuvB hexamer is contacted by two RuvA subunits (via domain III) on 2 adjacent RuvB subunits; this complex drives branch migration. In the full resolvosome a probable DNA-RuvA(4)-RuvB(12)-RuvC(2) complex forms which resolves the HJ.

The protein localises to the cytoplasm. It catalyses the reaction ATP + H2O = ADP + phosphate + H(+). In terms of biological role, the RuvA-RuvB-RuvC complex processes Holliday junction (HJ) DNA during genetic recombination and DNA repair, while the RuvA-RuvB complex plays an important role in the rescue of blocked DNA replication forks via replication fork reversal (RFR). RuvA specifically binds to HJ cruciform DNA, conferring on it an open structure. The RuvB hexamer acts as an ATP-dependent pump, pulling dsDNA into and through the RuvAB complex. RuvB forms 2 homohexamers on either side of HJ DNA bound by 1 or 2 RuvA tetramers; 4 subunits per hexamer contact DNA at a time. Coordinated motions by a converter formed by DNA-disengaged RuvB subunits stimulates ATP hydrolysis and nucleotide exchange. Immobilization of the converter enables RuvB to convert the ATP-contained energy into a lever motion, pulling 2 nucleotides of DNA out of the RuvA tetramer per ATP hydrolyzed, thus driving DNA branch migration. The RuvB motors rotate together with the DNA substrate, which together with the progressing nucleotide cycle form the mechanistic basis for DNA recombination by continuous HJ branch migration. Branch migration allows RuvC to scan DNA until it finds its consensus sequence, where it cleaves and resolves cruciform DNA. This Helicobacter pylori (strain P12) protein is Holliday junction branch migration complex subunit RuvB.